Here is a 137-residue protein sequence, read N- to C-terminus: uncharacterized protein (137 aa).

This is an uncharacterized protein from Frog virus 3 (isolate Goorha) (FV-3).